The following is a 283-amino-acid chain: Circadian clock oscillator protein KaiA (283 aa).

Positions 3–133 are psR domain, binds oxidized quinones; it reads QSTALTICGL…VKLCPGCAVP (131 aa). Residues 3–163 enclose the KaiA N-terminal domain; it reads QSTALTICGL…RLSQKLKERL (161 aa). Residues 164-172 form a flexible linker region; sequence GYLGVYYKR. Positions 173–281 constitute a KaiA C-terminal domain; it reads DTAFFFRRMS…CEMYRRSIPR (109 aa).

As to quaternary structure, homodimer. The KaiABC complex composition changes during the circadian cycle to control KaiC phosphorylation. Complexes KaiC(6), KaiA(2-4):KaiC(6), KaiB(6):KaiC(6) and KaiC(6):KaiB(6):KaiA(12) are among the most important forms, many form cooperatively. KaiA and CikA bind to the same region of the KaiB(fs) form and therefore compete.

Key component of the KaiABC oscillator complex, which constitutes the main circadian regulator in cyanobacteria. Complex composition changes during the circadian cycle to control KaiC phosphorylation. KaiA stimulates KaiC autophosphorylation, while KaiB sequesters KaiA, leading to KaiC autodephosphorylation. KaiA binding to the KaiC CII domain during the subjective day yields KaiA(2-4):KaiC(6) complexes which stimulate KaiC autophosphorylation. Phospho-Ser-431 KaiC accumulation triggers binding of KaiB during the subjective night to form the KaiB(6):KaiC(6) complex, leading to changes in the output regulators CikA and SasA. KaiB(6):KaiC(6) formation exposes a site for KaiA binding on KaiB that sequesters KaiA from KaiC's CII domain, making the KaiC(6):KaiB(6):KaiA(12) complex resulting in KaiC autodephosphorylation. Complete dephosphorylation of KaiC leads to dissociation of KaiA(2):KaiB(1), completing 1 cycle of the Kai oscillator. In terms of biological role, binds oxidized quinones via the N-terminal PsR domain, allowing it to sense redox changes and possibly mediate clock input. This chain is Circadian clock oscillator protein KaiA, found in Thermostichus vulcanus (Synechococcus vulcanus).